We begin with the raw amino-acid sequence, 443 residues long: Putative type II methyltransferase M.BsuMIIP (443 aa).

Residues 4 to 440 (LRVMSLFSGI…QELIHTYVNK (437 aa)) enclose the SAM-dependent MTase C5-type domain. Cys-78 is a catalytic residue.

Belongs to the class I-like SAM-binding methyltransferase superfamily. C5-methyltransferase family.

The enzyme catalyses a 2'-deoxycytidine in DNA + S-adenosyl-L-methionine = a 5-methyl-2'-deoxycytidine in DNA + S-adenosyl-L-homocysteine + H(+). A putative methylase, recognizes the double-stranded sequence 5'-GGCC-3', methylates C-?. There is no known cognate restriction enzyme. This is Putative type II methyltransferase M.BsuMIIP (mtbP) from Bacillus subtilis (strain 168).